The following is a 387-amino-acid chain: tRNA N6-adenosine threonylcarbamoyltransferase (387 aa).

Positions 112 and 116 each coordinate Fe cation. Substrate-binding positions include L134 to G138, D167, G180, and N325. A Fe cation-binding site is contributed by D353.

It belongs to the KAE1 / TsaD family. Requires Fe(2+) as cofactor.

Its subcellular location is the cytoplasm. It catalyses the reaction L-threonylcarbamoyladenylate + adenosine(37) in tRNA = N(6)-L-threonylcarbamoyladenosine(37) in tRNA + AMP + H(+). In terms of biological role, required for the formation of a threonylcarbamoyl group on adenosine at position 37 (t(6)A37) in tRNAs that read codons beginning with adenine. Is involved in the transfer of the threonylcarbamoyl moiety of threonylcarbamoyl-AMP (TC-AMP) to the N6 group of A37, together with TsaE and TsaB. TsaD likely plays a direct catalytic role in this reaction. This Rickettsia typhi (strain ATCC VR-144 / Wilmington) protein is tRNA N6-adenosine threonylcarbamoyltransferase.